A 291-amino-acid chain; its full sequence is MVLLQVKRGDELIFLYETSVKEKTDTVLRELVALHNGQLKIQRVCMEIEELAEHGTMVPPEMIGLNEEQREELKLKDVWADKCIPSGGFTINKDPLLRRNGQQPTEAMQKVLAGAMNDAKAMVDRRLAKSSKTLTPKIVEEALNLLRGGVTIVYPMQLPPHDSIRMEFTNTEDLTGTQASKEVIEPSKAQFWFAGHQMLMGKLMSDYLGHNDKTKVVVKLNQIGEGPPGREAVISDPLRRQMMAEAYRRQEELKKLEQDDDDEYLNSSWADSGSLKRQAHGLENVRFRFRK.

This sequence belongs to the CFAP298 family.

The chain is Cilia- and flagella-associated protein 298 from Drosophila melanogaster (Fruit fly).